We begin with the raw amino-acid sequence, 463 residues long: Glutamate--tRNA ligase (463 aa).

The short motif at 8 to 18 (PSPTGYLHIGG) is the 'HIGH' region element. A 'KMSKS' region motif is present at residues 236–240 (RLSKR). Lysine 239 contributes to the ATP binding site.

The protein belongs to the class-I aminoacyl-tRNA synthetase family. Glutamate--tRNA ligase type 1 subfamily. Monomer.

It localises to the cytoplasm. It carries out the reaction tRNA(Glu) + L-glutamate + ATP = L-glutamyl-tRNA(Glu) + AMP + diphosphate. In terms of biological role, catalyzes the attachment of glutamate to tRNA(Glu) in a two-step reaction: glutamate is first activated by ATP to form Glu-AMP and then transferred to the acceptor end of tRNA(Glu). The protein is Glutamate--tRNA ligase of Nitrosomonas eutropha (strain DSM 101675 / C91 / Nm57).